Consider the following 126-residue polypeptide: Fluoride-specific ion channel FluC (126 aa).

4 consecutive transmembrane segments (helical) span residues Phe-6–Leu-26, Tyr-36–Phe-56, Leu-68–Val-88, and Ile-99–Leu-119. Residues Gly-76 and Thr-79 each contribute to the Na(+) site.

This sequence belongs to the fluoride channel Fluc/FEX (TC 1.A.43) family.

The protein resides in the cell inner membrane. It carries out the reaction fluoride(in) = fluoride(out). With respect to regulation, na(+) is not transported, but it plays an essential structural role and its presence is essential for fluoride channel function. Fluoride-specific ion channel. Important for reducing fluoride concentration in the cell, thus reducing its toxicity. The sequence is that of Fluoride-specific ion channel FluC from Ralstonia nicotianae (strain ATCC BAA-1114 / GMI1000) (Ralstonia solanacearum).